A 236-amino-acid chain; its full sequence is 15,16-dihydrobiliverdin:ferredoxin oxidoreductase (236 aa).

It belongs to the HY2 family.

It catalyses the reaction 15,16-dihydrobiliverdin + oxidized 2[4Fe-4S]-[ferredoxin] = biliverdin IXalpha + reduced 2[4Fe-4S]-[ferredoxin] + 2 H(+). Catalyzes the two-electron reduction of biliverdin IX-alpha at the C15 methine bridge. In Prochlorococcus marinus (strain MIT 9215), this protein is 15,16-dihydrobiliverdin:ferredoxin oxidoreductase.